We begin with the raw amino-acid sequence, 401 residues long: MSFDLASRLASRRAEDLYRQRPLLESAQGPDVVVDGQPLLAFCSNDYLGLANHPEVIAALRAGAERWGVGGGASHLVVGHSGPHHELELALAEFTGRPRALLFSTGYMANLGAVAALVGKGDTVLEDRLNHASLLDAGLLSGARFSRYLHNDPASLAARLDKAEGNTLVVTDGVFSMDGNLADLPALAAVAQARGAWLMVDDAHGFGPLGASGGGIVEHFGLGQEQVPVLIGTLGKGFGTAGAFVAGSEELIETLIQYARPYIYTTSQPPAVACATLKSLELLRRESWRRQHLAALIARFRHGAEALGLTLMDSFTPIQPILVGGSRQAVALAGMLRARGIMVGAIRPPTVPANSARLRVTLSAAHSEAQVDRLLEALGESWRQLSSSLLAEIEAEEGDDA.

Residue arginine 19 participates in substrate binding. 106 to 107 is a pyridoxal 5'-phosphate binding site; the sequence is GY. Histidine 131 lines the substrate pocket. Positions 176, 204, and 233 each coordinate pyridoxal 5'-phosphate. Position 236 is an N6-(pyridoxal phosphate)lysine (lysine 236). Threonine 350 lines the substrate pocket.

It belongs to the class-II pyridoxal-phosphate-dependent aminotransferase family. BioF subfamily. As to quaternary structure, homodimer. The cofactor is pyridoxal 5'-phosphate.

It carries out the reaction 6-carboxyhexanoyl-[ACP] + L-alanine + H(+) = (8S)-8-amino-7-oxononanoate + holo-[ACP] + CO2. The protein operates within cofactor biosynthesis; biotin biosynthesis. Its function is as follows. Catalyzes the decarboxylative condensation of pimeloyl-[acyl-carrier protein] and L-alanine to produce 8-amino-7-oxononanoate (AON), [acyl-carrier protein], and carbon dioxide. The chain is 8-amino-7-oxononanoate synthase from Pseudomonas aeruginosa (strain ATCC 15692 / DSM 22644 / CIP 104116 / JCM 14847 / LMG 12228 / 1C / PRS 101 / PAO1).